The sequence spans 1135 residues: MARIPRCDFLGLPGICYLLSFLLAGLLLPRASAFNLDVMGAIRKEGEPGSLFGFSVALHRQLQPRPQSWLLVGAPQALALPGQQANRTGGLFACPLSLEETDCYRVDIDRGANVQKESKENQWLGVSVRSQGAGGKVVTCAHRYESRQRVDQVLETRDVIGRCFVLSQDLAIRDELDGGEWKFCEGRPQGHEQFGFCQQGTAATFSPDSHYLIFGAPGTYNWKGLLFVTNIDSSDPDQLVYKTLDPADRLTGPAGDLTLNSYLGFSIDSGKGLMRSEELSFVAGAPRANHKGAVVILRKDSASRLIPEVVLSGERLTSGFGYSLAVTDLNSDGWADLIVGAPYFFERQEELGGAVYVYMNQGGHWADISPLRLCGSPDSMFGISLAVLGDLNQDGFPDIAVGAPFDGDGKVFIYHGSSLGVVTKPSQVLEGEAVGIKSFGYSLSGGLDVDGNHYPDLLVGSLADTAALFRARPVLHVSQEIFIDPRAIDLEQPNCADGRLVCVHVKVCFSYVAVPSSYSPIVVLDYVLDGDTDRRLRGQAPRVTFPGRGPDDLKHQSSGTVSLKHQHDRVCGDTVFQLQENVKDKLRAIVVTLSYGLQTPRLRRQAPDQGLPLVAPILNAHQPSTQRTEIHFLKQGCGDDKICQSNLQLAQAQFCSRISDTEFQALPMDLDGTALFALSGQPFIGLELTVTNLPSDPARPQADGDDAHEAQLLATLPASLRYSGVRTLDSVEKPLCLSNENASHVECELGNPMKRGTQVTFYLILSTSGITIETTELKVELLLATISEQDLHPVSVRAHVFIELPLSISGVATPQQLFFSGKVKGESAMRSERDVGSKVKYEVTVSNQGQSLNTLGSAFLNIMWPHEIANGKWLLYPMRVELEGGQGPEKKGICSPRPNILHLDVDSRDRRRRELGQPEPQEPPEKVEPSTSWWPVSSAEKRNVTLDCAQGTAKCVVFSCPLYSFDRAAVLHVWGRLWNSTFLEEYMSVKSLEVIVRANITVKSSIKNLLLRDASTVIPVMVYLDPVAVVAEGVPWWVILLAVLAGLLVLALLVLLLWKLGFFKRAKHPEATVPQYHAVKILREDRQQFKEEKTGTIQRSNWGNSQWEGSDAHPILAADWHPELGPDGHPVSVTA.

An N-terminal signal peptide occupies residues 1-33; sequence MARIPRCDFLGLPGICYLLSFLLAGLLLPRASA. Over 34–1036 the chain is Extracellular; that stretch reads FNLDVMGAIR…VAVVAEGVPW (1003 aa). 7 FG-GAP repeats span residues 38 to 103, 110 to 165, 185 to 238, 248 to 305, 306 to 367, 368 to 423, and 427 to 486; these read VMGA…ETDC, RGAN…RCFV, EGRP…DPDQ, DRLT…ASRL, IPEV…HWAD, ISPL…GVVT, and QVLE…IDPR. N86 carries an N-linked (GlcNAc...) asparagine glycan. 3 cysteine pairs are disulfide-bonded: C94/C103, C140/C163, and C184/C197. Positions 328, 330, 332, 336, 390, 392, 394, 398, 448, 450, 452, 454, and 456 each coordinate Ca(2+). Cystine bridges form between C495-C502, C508-C571, C637-C643, C736-C747, C894-C948, and C955-C960. N741 carries N-linked (GlcNAc...) asparagine glycosylation. Basic and acidic residues predominate over residues 905 to 916; it reads VDSRDRRRRELG. The disordered stretch occupies residues 905–933; that stretch reads VDSRDRRRRELGQPEPQEPPEKVEPSTSW. N-linked (GlcNAc...) asparagine glycosylation occurs at N943. N-linked (GlcNAc...) asparagine glycans are attached at residues N979 and N999. The helical transmembrane segment at 1037 to 1057 threads the bilayer; that stretch reads WVILLAVLAGLLVLALLVLLL. The Cytoplasmic portion of the chain corresponds to 1058-1135; that stretch reads WKLGFFKRAK…PDGHPVSVTA (78 aa). Residues 1061–1065 carry the GFFKR motif motif; it reads GFFKR. 3 repeat units span residues 1111-1114, 1119-1122, and 1127-1130. A 3 X 4 AA repeats of D-X-H-P region spans residues 1111–1130; it reads DAHPILAADWHPELGPDGHP.

The protein belongs to the integrin alpha chain family. As to quaternary structure, interacts (via C-terminus intracellular tail region) with CIB1; the interaction is stabilized/increased in a calcium- and magnesium-dependent manner. Heterodimer of an alpha and a beta subunit. The alpha subunit is composed of a heavy and a light chain linked by a disulfide bond. Alpha-7 associates with beta-1. Interacts with COMP. In terms of processing, ADP-ribosylated on at least two sites of the extracellular domain in skeletal myotubes. A 70 kDa form is created by proteolytic cleavage. Cleavage is elevated during myogenic differentiation and the cleaved form enhances cell adhesion and spreading on laminin. In terms of tissue distribution, expressed in skeletal and cardiac muscle. Expressed in replicating myoblasts. In differentiated muscle fibers localizes between fibers and the surrounding matrix. Isoform Alpha-7X1A and isoform Alpha-7X1B are expressed at myotendinous and neuromuscular junctions; isoform Alpha-7X1C is expressed at neuromuscular junctions and at extrasynaptic sites.

It localises to the membrane. Functionally, integrin alpha-7/beta-1 is the primary laminin receptor on skeletal myoblasts and adult myofibers. During myogenic differentiation, it may induce changes in the shape and mobility of myoblasts, and facilitate their localization at laminin-rich sites of secondary fiber formation. Involved in the maintenance of the myofibers cytoarchitecture as well as for their anchorage, viability and functional integrity. Required to promote contractile phenotype acquisition in differentiated airway smooth muscle (ASM) cells. Acts as a Schwann cell receptor for laminin-2. Acts as a receptor of COMP and mediates its effect on vascular smooth muscle cells (VSMCs) maturation. This chain is Integrin alpha-7 (Itga7), found in Rattus norvegicus (Rat).